The following is a 224-amino-acid chain: MAKSGKKYIQALSKVNKLKSYNIDDAISLLKEIKFVKFDETIDVSVNLNLKKNHTVRETLVLPHQFMKEKRILVFAKGEKAEEAREFGAAYVGDDDLINKIKDGFSDFDVVVATPDMMKDVGKLGPILGKRGLMPNPKTQTITNDLKGTIASLKKGRTEFRANKNGVINFSVGKSSMDSKKIRENYDEFIKELLKRRPSDLKGTFVDSVYVSSTMGPSVKIDFV.

This sequence belongs to the universal ribosomal protein uL1 family. As to quaternary structure, part of the 50S ribosomal subunit.

Its function is as follows. Binds directly to 23S rRNA. The L1 stalk is quite mobile in the ribosome, and is involved in E site tRNA release. Protein L1 is also a translational repressor protein, it controls the translation of the L11 operon by binding to its mRNA. The protein is Large ribosomal subunit protein uL1 of Borrelia recurrentis (strain A1).